Consider the following 608-residue polypeptide: Preterminal protein (608 aa).

Positions 338–347 match the Nuclear localization signal motif; sequence RLPMRRRRRR. Positions 342–377 are disordered; that stretch reads RRRRRRAPPPPPMSEELSEPEVEAFPPASPPRRSFE. Ser536 carries the post-translational modification O-(5'-phospho-DNA)-serine.

The protein belongs to the adenoviridae terminal protein family. In terms of assembly, heterodimer with the polymerase; this heterodimer binds to bp 9 to 18 of the genome. Interacts with host POU2F1; POU2F1 binds to the auxiliary sequences in the inverted terminal repeats and tethers the pTP-POL heterodimer to the origin DNA thereby participating in the assembly of the pre-initiation complex (POL-TP-DBP-NFIA-POU2F1). In terms of processing, preterminal protein is used to replicate viral genome, upon genomic encapsidation it is processed first into iTP and finally into TP by adenovirus protease.

It localises to the host nucleus matrix. Protein covalently bound to the viral DNA that acts as a primer for viral genomic replication by DNA strand displacement. Assembles on the viral origin of replication in an initiation complex with viral polymerase, DBP, host NFIA and host POU2F1/OCT1. During initiation, the polymerase covalently couples the first dCTP with Ser-580 of pTP. The terminal protein stimulates the template activity over 20 fold compared to protein-free templates. Neo-synthesized viral genomes are linked to two preterminal proteins, one for each 5' end. These new genomes are encapsidated in the nucleus, and during capsid maturation by viral protease, preterminal protein is first cleaved into intermediary (iTP), then into mature TP. May play a role in host nuclear matrix localization of genomic DNA. The polypeptide is Preterminal protein (Canine adenovirus serotype 1 (strain CLL) (CAdV-1)).